The following is a 353-amino-acid chain: MKSMPFAPIADLRVAQLIDANLDRAREGLRVVEDWCRFGLDREELVMTLKDWRQRLGRHHHDSYKQARSTATDQGIGLSHPAQQERHEPWHVVAANCARVQEALRVLEEFARQPDPQLAASAAAIRYGLYDLEVTVLQANAGKKRRQQLQDCHLCLITTSQSDLNSNDLLRTVNAALVAGIDMVQYRNKEASDLQRLTQAKELASLCRKHGALFIVNDRIDLALAVDADGVHLGQDDLPTDVARRLIGSERLLGRSTQFLAQLQKAEAEGCDYLGVGPVNSTATKPERQPIGLAYVKEASKATQLPWFAIGGINISNLEALRQAGAKRIAVIGAIMNSKDPAATSLQLLEALR.

Residues 1–128 (MKSMPFAPIA…AASAAAIRYG (128 aa)) are unknown. The interval 129 to 353 (LYDLEVTVLQ…TSLQLLEALR (225 aa)) is thiamine-phosphate synthase. 4-amino-2-methyl-5-(diphosphooxymethyl)pyrimidine-binding positions include 185 to 189 (QYRNK) and asparagine 217. Residues aspartate 218 and aspartate 237 each contribute to the Mg(2+) site. Residue serine 256 participates in 4-amino-2-methyl-5-(diphosphooxymethyl)pyrimidine binding. 282–284 (TAT) is a 2-[(2R,5Z)-2-carboxy-4-methylthiazol-5(2H)-ylidene]ethyl phosphate binding site. 4-amino-2-methyl-5-(diphosphooxymethyl)pyrimidine is bound at residue lysine 285. Glycine 312 provides a ligand contact to 2-[(2R,5Z)-2-carboxy-4-methylthiazol-5(2H)-ylidene]ethyl phosphate.

The protein belongs to the thiamine-phosphate synthase family. Requires Mg(2+) as cofactor.

The enzyme catalyses 2-[(2R,5Z)-2-carboxy-4-methylthiazol-5(2H)-ylidene]ethyl phosphate + 4-amino-2-methyl-5-(diphosphooxymethyl)pyrimidine + 2 H(+) = thiamine phosphate + CO2 + diphosphate. It carries out the reaction 2-(2-carboxy-4-methylthiazol-5-yl)ethyl phosphate + 4-amino-2-methyl-5-(diphosphooxymethyl)pyrimidine + 2 H(+) = thiamine phosphate + CO2 + diphosphate. The catalysed reaction is 4-methyl-5-(2-phosphooxyethyl)-thiazole + 4-amino-2-methyl-5-(diphosphooxymethyl)pyrimidine + H(+) = thiamine phosphate + diphosphate. It functions in the pathway cofactor biosynthesis; thiamine diphosphate biosynthesis; thiamine phosphate from 4-amino-2-methyl-5-diphosphomethylpyrimidine and 4-methyl-5-(2-phosphoethyl)-thiazole: step 1/1. Functionally, condenses 4-methyl-5-(beta-hydroxyethyl)thiazole monophosphate (THZ-P) and 2-methyl-4-amino-5-hydroxymethyl pyrimidine pyrophosphate (HMP-PP) to form thiamine monophosphate (TMP). The polypeptide is Thiamine-phosphate synthase (Prochlorococcus marinus (strain MIT 9313)).